The primary structure comprises 429 residues: Apolipoprotein A-IV (429 aa).

An N-terminal signal peptide occupies residues 1–20 (MFLKAVVLTLALVAVTGARA). 13 repeat units span residues 33 to 54 (DYFS…KSEL), 60 to 81 (ALFQ…KKLV), 82 to 103 (PFAT…EEIR), 115 to 136 (PHAN…QRLE), 137 to 158 (PYTD…RQLT), 159 to 180 (PYAQ…TSLR), 181 to 202 (PHAD…ERLT), 203 to 224 (PYAD…RSLA), 225 to 246 (PYAQ…FQMK), 247 to 268 (KNAE…QRLA), 269 to 286 (PLAE…EGLQ), 287 to 308 (KSLA…LRVE), and 309 to 330 (PYGE…QKLG). Positions 33–330 (DYFSQLSSNA…QMEQLRQKLG (298 aa)) are 13 X 22 AA approximate tandem repeats. Residues 359 to 429 (KEKESQDNTL…QVQMLAPLES (71 aa)) are disordered. A compositionally biased stretch (low complexity) spans 381–420 (QEQQQEQEQEQQQQQEQQQQQEQQREQQQQEQQQEQQQEQ).

Belongs to the apolipoprotein A1/A4/E family. In terms of assembly, homodimer. Post-translationally, phosphorylation sites are present in the extracellular medium. As to expression, secreted in plasma.

Its subcellular location is the secreted. Functionally, may have a role in chylomicrons and VLDL secretion and catabolism. Required for efficient activation of lipoprotein lipase by ApoC-II; potent activator of LCAT. Apoa-IV is a major component of HDL and chylomicrons. The sequence is that of Apolipoprotein A-IV (APOA4) from Macaca fascicularis (Crab-eating macaque).